Reading from the N-terminus, the 209-residue chain is Transmembrane 4 L6 family member 19 (209 aa).

Over 1 to 16 the chain is Cytoplasmic; it reads MVSSPCTQASSRTCSR. A helical transmembrane segment spans residues 17–37; sequence ILGLSLGTAALFAAGANVALL. Over 38–59 the chain is Extracellular; sequence LPNWDVTYLLRGLLGRHAMLGT. The chain crosses the membrane as a helical span at residues 60–80; sequence GLWGGGLMVLTAAILISLMGW. The Cytoplasmic segment spans residues 81–93; the sequence is RYGCFSKSGLCRS. Residues 94–114 form a helical membrane-spanning segment; sequence VLTALLSGGLALLGALICFVT. At 115–175 the chain is on the extracellular side; the sequence is SGVALKDGPF…PSAAVVWHVS (61 aa). A glycan (N-linked (GlcNAc...) asparagine) is linked at asparagine 133. A helical transmembrane segment spans residues 176 to 196; the sequence is LFSALLCISLLQLLLVVVHVI. Residues 186 to 196 are important for homodimerization; the sequence is LQLLLVVVHVI. Over 197 to 209 the chain is Cytoplasmic; that stretch reads NSLLGLFCSLCEK.

This sequence belongs to the L6 tetraspanin family. As to quaternary structure, may form homodimers and homooligomers. Interacts with integrins ITGAV and ITGB3. Interacts with components of members of the V0 complex of vacuolar(H+)-ATPase (V-ATPase), including ATP6V0B and ATP6V0D2; this interaction inhibits V1-V0 complex assembly. As to expression, in adipose tissue, expressed by macrophages.

It localises to the lysosome membrane. Its subcellular location is the cytoplasm. The protein localises to the cytoskeleton. It is found in the cell projection. The protein resides in the filopodium. Functionally, negatively regulates vacuolar (H+)-ATPase (V-ATPase) activity by interacting with members of V-ATPase V0 complex and hence inhibiting V1-V0 complex assembly. Required for multinucleation during osteoclast differentiation. The sequence is that of Transmembrane 4 L6 family member 19 (TM4SF19) from Homo sapiens (Human).